We begin with the raw amino-acid sequence, 630 residues long: 1-deoxy-D-xylulose-5-phosphate synthase (630 aa).

Residues histidine 72 and glycine 113–serine 115 each bind thiamine diphosphate. Aspartate 144 contributes to the Mg(2+) binding site. Thiamine diphosphate is bound by residues glycine 145–alanine 146, asparagine 173, tyrosine 284, and glutamate 367. Asparagine 173 provides a ligand contact to Mg(2+).

This sequence belongs to the transketolase family. DXPS subfamily. Homodimer. It depends on Mg(2+) as a cofactor. Thiamine diphosphate serves as cofactor.

The enzyme catalyses D-glyceraldehyde 3-phosphate + pyruvate + H(+) = 1-deoxy-D-xylulose 5-phosphate + CO2. Its pathway is metabolic intermediate biosynthesis; 1-deoxy-D-xylulose 5-phosphate biosynthesis; 1-deoxy-D-xylulose 5-phosphate from D-glyceraldehyde 3-phosphate and pyruvate: step 1/1. In terms of biological role, catalyzes the acyloin condensation reaction between C atoms 2 and 3 of pyruvate and glyceraldehyde 3-phosphate to yield 1-deoxy-D-xylulose-5-phosphate (DXP). This Bacillus cereus (strain AH820) protein is 1-deoxy-D-xylulose-5-phosphate synthase.